Reading from the N-terminus, the 466-residue chain is Siroheme synthase (466 aa).

Residues 1 to 203 form a precorrin-2 dehydrogenase /sirohydrochlorin ferrochelatase region; sequence MNYLPIFIDI…GKIQEAKADL (203 aa). Residues 22–23 and 43–44 contribute to the NAD(+) site; these read SI and KS. Ser-128 is subject to Phosphoserine. The segment at 216–466 is uroporphyrinogen-III C-methyltransferase; that stretch reads GAVYLVGGGP…FDAKPISSKK (251 aa). Residue Pro-225 participates in S-adenosyl-L-methionine binding. Residue Asp-248 is the Proton acceptor of the active site. The active-site Proton donor is Lys-270. S-adenosyl-L-methionine-binding positions include 301–303, Ile-306, 331–332, Met-383, and Gly-412; these read GGD and TA.

It in the N-terminal section; belongs to the precorrin-2 dehydrogenase / sirohydrochlorin ferrochelatase family. In the C-terminal section; belongs to the precorrin methyltransferase family.

It carries out the reaction uroporphyrinogen III + 2 S-adenosyl-L-methionine = precorrin-2 + 2 S-adenosyl-L-homocysteine + H(+). The enzyme catalyses precorrin-2 + NAD(+) = sirohydrochlorin + NADH + 2 H(+). It catalyses the reaction siroheme + 2 H(+) = sirohydrochlorin + Fe(2+). Its pathway is cofactor biosynthesis; adenosylcobalamin biosynthesis; precorrin-2 from uroporphyrinogen III: step 1/1. The protein operates within cofactor biosynthesis; adenosylcobalamin biosynthesis; sirohydrochlorin from precorrin-2: step 1/1. It participates in porphyrin-containing compound metabolism; siroheme biosynthesis; precorrin-2 from uroporphyrinogen III: step 1/1. It functions in the pathway porphyrin-containing compound metabolism; siroheme biosynthesis; siroheme from sirohydrochlorin: step 1/1. Its pathway is porphyrin-containing compound metabolism; siroheme biosynthesis; sirohydrochlorin from precorrin-2: step 1/1. Functionally, multifunctional enzyme that catalyzes the SAM-dependent methylations of uroporphyrinogen III at position C-2 and C-7 to form precorrin-2 via precorrin-1. Then it catalyzes the NAD-dependent ring dehydrogenation of precorrin-2 to yield sirohydrochlorin. Finally, it catalyzes the ferrochelation of sirohydrochlorin to yield siroheme. This is Siroheme synthase from Vesicomyosocius okutanii subsp. Calyptogena okutanii (strain HA).